The following is a 111-amino-acid chain: Phosphoribosyl-ATP pyrophosphatase (111 aa).

This sequence belongs to the PRA-PH family.

Its subcellular location is the cytoplasm. The catalysed reaction is 1-(5-phospho-beta-D-ribosyl)-ATP + H2O = 1-(5-phospho-beta-D-ribosyl)-5'-AMP + diphosphate + H(+). The protein operates within amino-acid biosynthesis; L-histidine biosynthesis; L-histidine from 5-phospho-alpha-D-ribose 1-diphosphate: step 2/9. This chain is Phosphoribosyl-ATP pyrophosphatase, found in Pseudomonas paraeruginosa (strain DSM 24068 / PA7) (Pseudomonas aeruginosa (strain PA7)).